A 101-amino-acid polypeptide reads, in one-letter code: Urease subunit beta (101 aa).

This sequence belongs to the urease beta subunit family. As to quaternary structure, heterotrimer of UreA (gamma), UreB (beta) and UreC (alpha) subunits. Three heterotrimers associate to form the active enzyme.

It localises to the cytoplasm. It catalyses the reaction urea + 2 H2O + H(+) = hydrogencarbonate + 2 NH4(+). It functions in the pathway nitrogen metabolism; urea degradation; CO(2) and NH(3) from urea (urease route): step 1/1. This is Urease subunit beta from Mesorhizobium japonicum (strain LMG 29417 / CECT 9101 / MAFF 303099) (Mesorhizobium loti (strain MAFF 303099)).